Here is a 503-residue protein sequence, read N- to C-terminus: Excitatory amino acid transporter (503 aa).

Over 1 to 18 (MPPDTRINKEIMVSWIRK) the chain is Cytoplasmic. A run of 3 helical transmembrane segments spans residues 19–39 (NLLL…GFLL), 59–79 (LMHM…ISGL), and 96–116 (TYYM…VLVI). Residues 117-198 (HPGDPTIKKE…SLDYVKASVE (82 aa)) are Extracellular-facing. 2 N-linked (GlcNAc...) asparagine glycosylation sites follow: asparagine 177 and asparagine 187. Helical transmembrane passes span 199-219 (YTSG…GISL), 239-259 (VIMK…FCLI), 281-301 (VTVL…IFFV), 369-389 (AVAA…GQVV), and 400-420 (IGAA…LTAV).

The protein belongs to the dicarboxylate/amino acid:cation symporter (DAACS) (TC 2.A.23) family.

The protein resides in the membrane. Transports L-glutamate and also L- and D-aspartate. Essential for terminating the postsynaptic action of glutamate by rapidly removing released glutamate from the synaptic cleft. Acts as a symport by cotransporting sodium. This Caenorhabditis elegans protein is Excitatory amino acid transporter (glt-1).